We begin with the raw amino-acid sequence, 208 residues long: Small ribosomal subunit protein eS8 (208 aa).

The interval Met1–Tyr27 is disordered. Residues Trp8–Lys26 are compositionally biased toward basic residues.

It belongs to the eukaryotic ribosomal protein eS8 family. Component of the small ribosomal subunit. Identified in a IGF2BP1-dependent mRNP granule complex containing untranslated mRNAs. Part of the small subunit (SSU) processome, composed of more than 70 proteins and the RNA chaperone small nucleolar RNA (snoRNA) U3.

The protein localises to the cytoplasm. It is found in the membrane. Its subcellular location is the nucleus. The protein resides in the nucleolus. Functionally, component of the small ribosomal subunit. The ribosome is a large ribonucleoprotein complex responsible for the synthesis of proteins in the cell. Part of the small subunit (SSU) processome, first precursor of the small eukaryotic ribosomal subunit. During the assembly of the SSU processome in the nucleolus, many ribosome biogenesis factors, an RNA chaperone and ribosomal proteins associate with the nascent pre-rRNA and work in concert to generate RNA folding, modifications, rearrangements and cleavage as well as targeted degradation of pre-ribosomal RNA by the RNA exosome. The sequence is that of Small ribosomal subunit protein eS8 (rps8) from Danio rerio (Zebrafish).